A 176-amino-acid polypeptide reads, in one-letter code: ATP-dependent protease subunit HslV (176 aa).

Thr-2 is a catalytic residue. Residues Gly-157, Cys-160, and Thr-163 each coordinate Na(+).

The protein belongs to the peptidase T1B family. HslV subfamily. As to quaternary structure, a double ring-shaped homohexamer of HslV is capped on each side by a ring-shaped HslU homohexamer. The assembly of the HslU/HslV complex is dependent on binding of ATP.

The protein localises to the cytoplasm. The catalysed reaction is ATP-dependent cleavage of peptide bonds with broad specificity.. Its activity is regulated as follows. Allosterically activated by HslU binding. Protease subunit of a proteasome-like degradation complex believed to be a general protein degrading machinery. The polypeptide is ATP-dependent protease subunit HslV (Pectobacterium atrosepticum (strain SCRI 1043 / ATCC BAA-672) (Erwinia carotovora subsp. atroseptica)).